The chain runs to 715 residues: Fatty acid oxidation complex subunit alpha (715 aa).

An enoyl-CoA hydratase/isomerase region spans residues 1-190 (MIYEGKAITV…KVGAVDAVVA (190 aa)). Asp-297 contributes to the substrate binding site. The interval 312 to 715 (KDVKQAAVLG…MAKNGQSFFG (404 aa)) is 3-hydroxyacyl-CoA dehydrogenase. Residues Met-325, Asp-344, 401 to 403 (VVE), Lys-408, and Ser-430 each bind NAD(+). Residue His-451 is the For 3-hydroxyacyl-CoA dehydrogenase activity of the active site. Asn-454 is an NAD(+) binding site. Substrate-binding residues include Asn-501 and Tyr-660.

In the N-terminal section; belongs to the enoyl-CoA hydratase/isomerase family. It in the C-terminal section; belongs to the 3-hydroxyacyl-CoA dehydrogenase family. Heterotetramer of two alpha chains (FadB) and two beta chains (FadA).

It carries out the reaction a (3S)-3-hydroxyacyl-CoA + NAD(+) = a 3-oxoacyl-CoA + NADH + H(+). The catalysed reaction is a (3S)-3-hydroxyacyl-CoA = a (2E)-enoyl-CoA + H2O. It catalyses the reaction a 4-saturated-(3S)-3-hydroxyacyl-CoA = a (3E)-enoyl-CoA + H2O. The enzyme catalyses (3S)-3-hydroxybutanoyl-CoA = (3R)-3-hydroxybutanoyl-CoA. It carries out the reaction a (3Z)-enoyl-CoA = a 4-saturated (2E)-enoyl-CoA. The catalysed reaction is a (3E)-enoyl-CoA = a 4-saturated (2E)-enoyl-CoA. Its pathway is lipid metabolism; fatty acid beta-oxidation. Its function is as follows. Involved in the aerobic and anaerobic degradation of long-chain fatty acids via beta-oxidation cycle. Catalyzes the formation of 3-oxoacyl-CoA from enoyl-CoA via L-3-hydroxyacyl-CoA. It can also use D-3-hydroxyacyl-CoA and cis-3-enoyl-CoA as substrate. In Pseudomonas fluorescens (strain ATCC BAA-477 / NRRL B-23932 / Pf-5), this protein is Fatty acid oxidation complex subunit alpha.